The following is a 187-amino-acid chain: MVKVWFMDDEQETDQRLEHHRSPPDYLELPELYQKTGVEYFKINADDYQNDAILGELRAKRGYTYDDEITCSEKCLPDYANKLKNFFTEHLHTDEEIRLVLDGSGYFDVRDNEEQWLRIQVVKGDLIIIPAGIYHRFTLDSNNFIKARRYFVGEPVWTPHNRPADDLDCRKSYLKHQAESFVQLNQV.

Fe(2+) is bound by residues histidine 90, histidine 92, glutamate 96, and histidine 135. 4 residues coordinate Ni(2+): histidine 90, histidine 92, glutamate 96, and histidine 135.

This sequence belongs to the acireductone dioxygenase (ARD) family. Requires Fe(2+) as cofactor. The cofactor is Ni(2+).

It is found in the cytoplasm. It localises to the nucleus. It carries out the reaction 1,2-dihydroxy-5-(methylsulfanyl)pent-1-en-3-one + O2 = 4-methylsulfanyl-2-oxobutanoate + formate + 2 H(+). The enzyme catalyses 1,2-dihydroxy-5-(methylsulfanyl)pent-1-en-3-one + O2 = 3-(methylsulfanyl)propanoate + CO + formate + 2 H(+). It functions in the pathway amino-acid biosynthesis; L-methionine biosynthesis via salvage pathway; L-methionine from S-methyl-5-thio-alpha-D-ribose 1-phosphate: step 5/6. Catalyzes 2 different reactions between oxygen and the acireductone 1,2-dihydroxy-3-keto-5-methylthiopentene (DHK-MTPene) depending upon the metal bound in the active site. Fe-containing acireductone dioxygenase (Fe-ARD) produces formate and 2-keto-4-methylthiobutyrate (KMTB), the alpha-ketoacid precursor of methionine in the methionine recycle pathway. Ni-containing acireductone dioxygenase (Ni-ARD) produces methylthiopropionate, carbon monoxide and formate, and does not lie on the methionine recycle pathway. In Drosophila pseudoobscura pseudoobscura (Fruit fly), this protein is Acireductone dioxygenase.